We begin with the raw amino-acid sequence, 151 residues long: Transcriptional repressor NrdR (151 aa).

The segment at 1 to 24 (MRCPKCQHNGTRVLDSRPSDESRS) is disordered. A zinc finger lies at 3 to 34 (CPKCQHNGTRVLDSRPSDESRSIKRRRECEKC). Basic and acidic residues predominate over residues 14 to 24 (LDSRPSDESRS). Positions 49 to 139 (LLIIKKDGMR…VYRQFKDINV (91 aa)) constitute an ATP-cone domain.

The protein belongs to the NrdR family. It depends on Zn(2+) as a cofactor.

Its function is as follows. Negatively regulates transcription of bacterial ribonucleotide reductase nrd genes and operons by binding to NrdR-boxes. This chain is Transcriptional repressor NrdR, found in Shouchella clausii (strain KSM-K16) (Alkalihalobacillus clausii).